Here is a 398-residue protein sequence, read N- to C-terminus: Probable aminomethyltransferase (398 aa).

The protein belongs to the GcvT family. The glycine cleavage system is composed of four proteins: P, T, L and H.

It catalyses the reaction N(6)-[(R)-S(8)-aminomethyldihydrolipoyl]-L-lysyl-[protein] + (6S)-5,6,7,8-tetrahydrofolate = N(6)-[(R)-dihydrolipoyl]-L-lysyl-[protein] + (6R)-5,10-methylene-5,6,7,8-tetrahydrofolate + NH4(+). The glycine cleavage system catalyzes the degradation of glycine. The chain is Probable aminomethyltransferase from Pyrococcus abyssi (strain GE5 / Orsay).